We begin with the raw amino-acid sequence, 351 residues long: Methionine import ATP-binding protein MetN (351 aa).

Residues 2–241 (IELRNVTKTY…PKTEIAKKFT (240 aa)) form the ABC transporter domain. Residue 38–45 (GKSGAGKS) participates in ATP binding.

It belongs to the ABC transporter superfamily. Methionine importer (TC 3.A.1.24) family. In terms of assembly, the complex is composed of two ATP-binding proteins (MetN), two transmembrane proteins (MetI) and a solute-binding protein (MetQ).

The protein resides in the cell inner membrane. The enzyme catalyses L-methionine(out) + ATP + H2O = L-methionine(in) + ADP + phosphate + H(+). It catalyses the reaction D-methionine(out) + ATP + H2O = D-methionine(in) + ADP + phosphate + H(+). Its function is as follows. Part of the ABC transporter complex MetNIQ involved in methionine import. Responsible for energy coupling to the transport system. This Coxiella burnetii (strain RSA 493 / Nine Mile phase I) protein is Methionine import ATP-binding protein MetN.